The primary structure comprises 736 residues: Zinc finger CCCH domain-containing protein 14 (736 aa).

Position 1 is an N-acetylmethionine (Met-1). 2 stretches are compositionally biased toward polar residues: residues 77–103 (TTEP…SNFS) and 131–145 (VSTS…NVRQ). The tract at residues 77–145 (TTEPSSLKSS…QESKTTNVRQ (69 aa)) is disordered. Ser-85 bears the Phosphoserine mark. Residues Lys-99, Lys-139, Lys-175, and Lys-198 each participate in a glycyl lysine isopeptide (Lys-Gly) (interchain with G-Cter in SUMO2) cross-link. A Phosphoserine modification is found at Ser-240. Lys-245 participates in a covalent cross-link: Glycyl lysine isopeptide (Lys-Gly) (interchain with G-Cter in SUMO2). Residue Ser-281 is modified to Phosphoserine. Residues Lys-283 and Lys-295 each participate in a glycyl lysine isopeptide (Lys-Gly) (interchain with G-Cter in SUMO2) cross-link. The tract at residues 310 to 350 (HDGEEEEEDDDYGSRTGSISSSVSVPAKPERRPSLPPSKQA) is disordered. Phosphoserine is present on residues Ser-327 and Ser-343. Position 357 is an N6-acetyllysine; alternate (Lys-357). A Glycyl lysine isopeptide (Lys-Gly) (interchain with G-Cter in SUMO2); alternate cross-link involves residue Lys-357. A Glycyl lysine isopeptide (Lys-Gly) (interchain with G-Cter in SUMO2) cross-link involves residue Lys-378. A phosphoserine mark is found at Ser-390 and Ser-409. The disordered stretch occupies residues 398–430 (VVQGQSRTPRISPPIKEEETKGDSVEKNQGTQQ). Basic and acidic residues predominate over residues 412 to 423 (IKEEETKGDSVE). A Glycyl lysine isopeptide (Lys-Gly) (interchain with G-Cter in SUMO2) cross-link involves residue Lys-413. At Ser-421 the chain carries Phosphoserine. A Glycyl lysine isopeptide (Lys-Gly) (interchain with G-Cter in SUMO2) cross-link involves residue Lys-489. 4 positions are modified to phosphoserine: Ser-498, Ser-515, Ser-527, and Ser-620. 5 C3H1-type zinc fingers span residues 595 to 620 (EKLL…HPIS), 621 to 640 (PCKA…VHPN), 641 to 656 (CKYD…PFTH), 682 to 699 (CRYF…YHPK), and 701 to 719 (CRFN…HPTI).

Belongs to the ZC3H14 family. Homodimer; facilitating circular RNAs (circRNAs) formation. Associates with the spliceosome. Interacts with HOOK2. Interacts with ZFC3H1 in a RNase-sensitive manner. In terms of tissue distribution, expressed in fetal and adult brain. Expressed in fetal and adult temporal lobe.

The protein resides in the nucleus speckle. It localises to the cytoplasm. RNA-binding protein involved in the biogenesis of circular RNAs (circRNAs), which are produced by back-splicing circularization of pre-mRNAs. Acts by binding to both exon-intron boundary and 3'-UTR of pre-mRNAs to promote circRNA biogenesis through dimerization and the association with the spliceosome. Required for spermatogenesis via involvement in circRNA biogenesis. Regulates the pre-mRNA processing of ATP5MC1; preventing its degradation. Also binds the poly(A) tail of mRNAs; controlling poly(A) length in neuronal cells. This chain is Zinc finger CCCH domain-containing protein 14, found in Homo sapiens (Human).